Here is a 199-residue protein sequence, read N- to C-terminus: Recombination protein RecR (199 aa).

The C4-type zinc finger occupies 58–73 (CSICCNITDTDPCSMC). Residues 81–176 (SVICVVEDPR…KVTRIAHGLP (96 aa)) form the Toprim domain.

Belongs to the RecR family.

Functionally, may play a role in DNA repair. It seems to be involved in an RecBC-independent recombinational process of DNA repair. It may act with RecF and RecO. The polypeptide is Recombination protein RecR (Clostridioides difficile (strain 630) (Peptoclostridium difficile)).